Here is a 156-residue protein sequence, read N- to C-terminus: ATP synthase subunit b (156 aa).

The helical transmembrane segment at 7-27 (LIGQTVAFIIFVWFCMKFVWP) threads the bilayer.

Belongs to the ATPase B chain family. As to quaternary structure, F-type ATPases have 2 components, F(1) - the catalytic core - and F(0) - the membrane proton channel. F(1) has five subunits: alpha(3), beta(3), gamma(1), delta(1), epsilon(1). F(0) has three main subunits: a(1), b(2) and c(10-14). The alpha and beta chains form an alternating ring which encloses part of the gamma chain. F(1) is attached to F(0) by a central stalk formed by the gamma and epsilon chains, while a peripheral stalk is formed by the delta and b chains.

Its subcellular location is the cell inner membrane. In terms of biological role, f(1)F(0) ATP synthase produces ATP from ADP in the presence of a proton or sodium gradient. F-type ATPases consist of two structural domains, F(1) containing the extramembraneous catalytic core and F(0) containing the membrane proton channel, linked together by a central stalk and a peripheral stalk. During catalysis, ATP synthesis in the catalytic domain of F(1) is coupled via a rotary mechanism of the central stalk subunits to proton translocation. Component of the F(0) channel, it forms part of the peripheral stalk, linking F(1) to F(0). The polypeptide is ATP synthase subunit b (Shewanella oneidensis (strain ATCC 700550 / JCM 31522 / CIP 106686 / LMG 19005 / NCIMB 14063 / MR-1)).